The chain runs to 117 residues: MSSNVPADMINLRLILVSGKTKEFLFSPNDSASDIAKHVYDNWPMDWEEEQVSSPNILRLIYQGRFLHGNVTLGALKLPFGKTTVMHLVARETLPEPNSQGQRNREKTGESNCCVIL.

The 79-residue stretch at 10 to 88 folds into the Ubiquitin-like domain; that stretch reads INLRLILVSG…PFGKTTVMHL (79 aa). A lipid anchor (S-palmitoyl cysteine) is attached at C113. Cysteine methyl ester is present on C114. Residue C114 is the site of S-geranylgeranyl cysteine attachment. The propeptide at 115 to 117 is removed in mature form; it reads VIL.

The protein resides in the cell membrane. This chain is Ubiquitin-like protein 3 (UBL3), found in Bos taurus (Bovine).